Here is a 383-residue protein sequence, read N- to C-terminus: Probable purine permease 16 (383 aa).

Helical transmembrane passes span 30-50, 72-92, 113-133, 138-158, 166-186, 203-223, 247-267, 297-317, 322-342, and 346-363; these read ISVFICGFLIFAGDSLVMLLL, WTQALIQNAAFPILIPFFFIL, VLSLYVSLGVLVSVYSKLYAL, VGWGILLSTQLILTSLFSAFI, WIIISIIFTLGADFFGGPAFA, LILIFPTLAFSLSLCLMQLGF, ICVSFIATLICTVGLFASGEF, VWAVGLLGLVLLVSGLFADVV, SPVVALLVVLAFDFMDDEFGW, and GALLGAVLALASYFYSLH.

The protein belongs to the purine permeases (TC 2.A.7.14) family.

It is found in the membrane. The chain is Probable purine permease 16 (PUP16) from Arabidopsis thaliana (Mouse-ear cress).